The chain runs to 79 residues: uncharacterized protein (79 aa).

This is an uncharacterized protein from Methanocaldococcus jannaschii (strain ATCC 43067 / DSM 2661 / JAL-1 / JCM 10045 / NBRC 100440) (Methanococcus jannaschii).